We begin with the raw amino-acid sequence, 181 residues long: MHLTLQSVYPAIIIIFFLYKKIKRSIGYQPLKPRWLFTRIILFSLFAFGLSIFSAIHPFLYGYLILGILGGWLLVFFAKKNISFEKRRGKIYFRTHIWVEVILLTLFLSRFLYRVTELYLTSPDLNRLGSYSQSIGTDPLTIGVCFLIAVYYIGFSSFIIKLSRNELEQHEYNKEKDILAR.

5 consecutive transmembrane segments (helical) span residues 5–22, 35–57, 61–78, 91–113, and 140–162; these read LQSV…YKKI, WLFT…SAIH, YGYL…VFFA, IYFR…RFLY, and LTIG…IIKL.

It localises to the cell membrane. This chain is Protein csk22 (csk22), found in Bacillus subtilis (strain 168).